The chain runs to 345 residues: Putative F-box protein At3g17265 (345 aa).

In terms of domain architecture, F-box spans Met1–Asn46.

The polypeptide is Putative F-box protein At3g17265 (Arabidopsis thaliana (Mouse-ear cress)).